Reading from the N-terminus, the 125-residue chain is UPF0332 protein AF_0298 (125 aa).

It belongs to the UPF0332 family.

The sequence is that of UPF0332 protein AF_0298 from Archaeoglobus fulgidus (strain ATCC 49558 / DSM 4304 / JCM 9628 / NBRC 100126 / VC-16).